Consider the following 194-residue polypeptide: MIGRLRGILAYKQPPWLVIDVGGVGYELEAPMSTFYDLPDVGRDVILFTHYAQKEDSVALYGFLREGERRLFRDVQKVTGIGAKIALAVLSGVSVDEFARLITSGDITALTRIPGIGKKTAERMVVELRDRAADFSSGAPITGQLGPDAVSEATVALQQLGYKPAEAARMARDAGAEGDEVATVIRKALQAALR.

The domain I stretch occupies residues 1-64 (MIGRLRGILA…EDSVALYGFL (64 aa)). The domain II stretch occupies residues 65 to 140 (REGERRLFRD…RAADFSSGAP (76 aa)). The interval 140 to 144 (PITGQ) is flexible linker. The interval 145-194 (LGPDAVSEATVALQQLGYKPAEAARMARDAGAEGDEVATVIRKALQAALR) is domain III.

This sequence belongs to the RuvA family. In terms of assembly, homotetramer. Forms an RuvA(8)-RuvB(12)-Holliday junction (HJ) complex. HJ DNA is sandwiched between 2 RuvA tetramers; dsDNA enters through RuvA and exits via RuvB. An RuvB hexamer assembles on each DNA strand where it exits the tetramer. Each RuvB hexamer is contacted by two RuvA subunits (via domain III) on 2 adjacent RuvB subunits; this complex drives branch migration. In the full resolvosome a probable DNA-RuvA(4)-RuvB(12)-RuvC(2) complex forms which resolves the HJ.

It is found in the cytoplasm. The RuvA-RuvB-RuvC complex processes Holliday junction (HJ) DNA during genetic recombination and DNA repair, while the RuvA-RuvB complex plays an important role in the rescue of blocked DNA replication forks via replication fork reversal (RFR). RuvA specifically binds to HJ cruciform DNA, conferring on it an open structure. The RuvB hexamer acts as an ATP-dependent pump, pulling dsDNA into and through the RuvAB complex. HJ branch migration allows RuvC to scan DNA until it finds its consensus sequence, where it cleaves and resolves the cruciform DNA. The polypeptide is Holliday junction branch migration complex subunit RuvA (Xanthomonas euvesicatoria pv. vesicatoria (strain 85-10) (Xanthomonas campestris pv. vesicatoria)).